The following is a 769-amino-acid chain: 3-O-beta-D-glucopyranosyl-beta-D-glucuronide phosphorylase (769 aa).

Aspartate 457 (proton donor) is an active-site residue.

It belongs to the glycosyl hydrolase 94 family. Homodimer.

Its subcellular location is the cytoplasm. The enzyme catalyses 3-O-beta-D-glucosyl-D-glucuronate + phosphate = aldehydo-D-glucuronate + alpha-D-glucose 1-phosphate. The catalysed reaction is a 3-O-beta-D-glucosyl-beta-D-glucuronoside + phosphate = a beta-D-glucuronoside + alpha-D-glucose 1-phosphate. Glycoside phosphorylase that catalyzes the reversible phosphorolysis of 3-O-beta-D-glucosyl-D-glucuronate into D-glucuronic acid and alpha-D-glucose 1-phosphate. Cannot phosphorolyze cellobionic acid and laminaribiose. In the reverse direction, using alpha-D-glucose 1-phosphate as a donor substrate, the enzyme acts on D-glucuronate and its artificial derivative p-nitrophenyl-beta-D-glucuronide. The apparent catalytic efficiency towards p-nitrophenyl-beta-D-glucuronide is approximately 5-fold higher than that towards D-glucuronic acid. Is probably involved in the metabolism of oligosaccharides containing the 3-O-beta-D-glucopyranosyl-beta-D-glucuronide structure released from bacterial and plant acidic carbohydrates. This is 3-O-beta-D-glucopyranosyl-beta-D-glucuronide phosphorylase from Paenibacillus borealis.